The chain runs to 408 residues: Peptidase T (408 aa).

His-78 serves as a coordination point for Zn(2+). The active site involves Asp-80. Asp-141 is a binding site for Zn(2+). Catalysis depends on Glu-175, which acts as the Proton acceptor. Glu-176, Asp-198, and His-380 together coordinate Zn(2+).

It belongs to the peptidase M20B family. Requires Zn(2+) as cofactor.

Its subcellular location is the cytoplasm. It carries out the reaction Release of the N-terminal residue from a tripeptide.. In terms of biological role, cleaves the N-terminal amino acid of tripeptides. The sequence is that of Peptidase T from Clostridium botulinum (strain Kyoto / Type A2).